Here is a 694-residue protein sequence, read N- to C-terminus: Polyphosphate kinase (694 aa).

N45 serves as a coordination point for ATP. The Mg(2+) site is built by R367 and R397. The active-site Phosphohistidine intermediate is the H427. Y460, R553, and H580 together coordinate ATP.

It belongs to the polyphosphate kinase 1 (PPK1) family. Requires Mg(2+) as cofactor. An intermediate of this reaction is the autophosphorylated ppk in which a phosphate is covalently linked to a histidine residue through a N-P bond.

The enzyme catalyses [phosphate](n) + ATP = [phosphate](n+1) + ADP. Functionally, catalyzes the reversible transfer of the terminal phosphate of ATP to form a long-chain polyphosphate (polyP). The chain is Polyphosphate kinase from Campylobacter jejuni subsp. jejuni serotype O:6 (strain 81116 / NCTC 11828).